Here is a 333-residue protein sequence, read N- to C-terminus: Ketol-acid reductoisomerase (NADP(+)) (333 aa).

Residues 2–182 (AELFYDADAD…GGTRAGVIKT (181 aa)) form the KARI N-terminal Rossmann domain. NADP(+) is bound by residues 25 to 28 (YGSQ), S51, S53, and 83 to 86 (DPIQ). H108 is a catalytic residue. G134 is a binding site for NADP(+). The 146-residue stretch at 183 to 328 (TFTEETETDL…KELRKLMSWV (146 aa)) folds into the KARI C-terminal knotted domain. The Mg(2+) site is built by D191, E195, E227, and E231. S252 provides a ligand contact to substrate.

The protein belongs to the ketol-acid reductoisomerase family. Mg(2+) serves as cofactor.

The catalysed reaction is (2R)-2,3-dihydroxy-3-methylbutanoate + NADP(+) = (2S)-2-acetolactate + NADPH + H(+). The enzyme catalyses (2R,3R)-2,3-dihydroxy-3-methylpentanoate + NADP(+) = (S)-2-ethyl-2-hydroxy-3-oxobutanoate + NADPH + H(+). The protein operates within amino-acid biosynthesis; L-isoleucine biosynthesis; L-isoleucine from 2-oxobutanoate: step 2/4. It participates in amino-acid biosynthesis; L-valine biosynthesis; L-valine from pyruvate: step 2/4. In terms of biological role, involved in the biosynthesis of branched-chain amino acids (BCAA). Catalyzes an alkyl-migration followed by a ketol-acid reduction of (S)-2-acetolactate (S2AL) to yield (R)-2,3-dihydroxy-isovalerate. In the isomerase reaction, S2AL is rearranged via a Mg-dependent methyl migration to produce 3-hydroxy-3-methyl-2-ketobutyrate (HMKB). In the reductase reaction, this 2-ketoacid undergoes a metal-dependent reduction by NADPH to yield (R)-2,3-dihydroxy-isovalerate. The chain is Ketol-acid reductoisomerase (NADP(+)) from Streptomyces avermitilis (strain ATCC 31267 / DSM 46492 / JCM 5070 / NBRC 14893 / NCIMB 12804 / NRRL 8165 / MA-4680).